Reading from the N-terminus, the 125-residue chain is Large ribosomal subunit protein bL12 (125 aa).

The protein belongs to the bacterial ribosomal protein bL12 family. Homodimer. Part of the ribosomal stalk of the 50S ribosomal subunit. Forms a multimeric L10(L12)X complex, where L10 forms an elongated spine to which 2 to 4 L12 dimers bind in a sequential fashion. Binds GTP-bound translation factors.

Forms part of the ribosomal stalk which helps the ribosome interact with GTP-bound translation factors. Is thus essential for accurate translation. The protein is Large ribosomal subunit protein bL12 of Variovorax paradoxus (strain S110).